A 281-amino-acid chain; its full sequence is CMT1A duplicated region transcript 15 protein-like protein (281 aa).

2 disordered regions span residues 107–131 (KPAW…DQPS) and 150–187 (AENV…HGGG). The segment covering 108–120 (PAWEEPPPERALE) has biased composition (basic and acidic residues). Positions 165–178 (STAPASRSHAAPSP) are enriched in low complexity. Residues 207–227 (AGTTALLLQGLFIVLILVGYI) form a helical membrane-spanning segment.

It is found in the membrane. In Homo sapiens (Human), this protein is CMT1A duplicated region transcript 15 protein-like protein (CDRT15L2).